The primary structure comprises 609 residues: MELSETYACVPSTERGRGILISGNSKSDTILYTNGRSVVTLDLNNPLKVSIYGEHAYPATVARYSPNGEWIASGDVSGTVRIWGAYNDHVLKNEFKVLAGRIDDLQWSADGMRIVASGDGKGKSLVRAFMWDSGSNVGEFDGHSRRVLSCAIKPTRPFRIVTCGEDFLVNFYEGPPFKFKLSSREHSNFVNCVRFAPDGSKFITVSSDKKGIIYDGKTCEILGELSSDDGHKGSIYAVSWSPDGKQVLTVSADKSAKIWDISDNGSGSLNTTLNCPGSSGGVDDMLVGCLWQNDHIVTVSLGGTISIFSASDLDKSPFQFSGHMKNVSSLAVLKGNADYILSGSYDGLICKWMLGRGFCGKLQRTQNSQIKCFAAHEEEIVTSGYDNKISRISYKDDQCTNEESIDIGNQPKDLSLAPLSPDLLLVTFESGVVFLRDGKVVSTINLGFIVTALAVTPDGTEAVIGGQDGKLHLYSINGDSLTEEAVLERHRGAISVIRYSPDLSMFASADLNREAVVWDRVSREMKLKNMLYHSARINCLAWSPNSTMVATGSLDTCVIVYEVDKPASSRMTIKGAHLGGVYGLGFADDSHVVSSGEDACIRVWSFTPQ.

12 WD repeats span residues 2–42 (ELSE…VTLD), 54–93 (EHAYPATVARYSPNGEWIASGDVSGTVRIWGAYNDHVLKN), 97–141 (VLAG…GEFD), 142–182 (GHSR…FKLS), 185–224 (EHSNFVNCVRFAPDGSKFITVSSDKKGIIYDGKTCEILGE), 230–269 (GHKGSIYAVSWSPDGKQVLTVSADKSAKIWDISDNGSGSL), 277–318 (GSSG…KSPF), 322–362 (GHMK…CGKL), 445–484 (NLGFIVTALAVTPDGTEAVIGGQDGKLHLYSINGDSLTEE), 489–528 (RHRGAISVIRYSPDLSMFASADLNREAVVWDRVSREMKLK), 532–571 (YHSARINCLAWSPNSTMVATGSLDTCVIVYEVDKPASSRM), and 576–609 (AHLGGVYGLGFADDSHVVSSGEDACIRVWSFTPQ).

As to expression, expressed in leaves, stems, flower buds and flowers.

In terms of biological role, binds actin. Enhances the F-actin depolymerization activity of actin-depolymerizing factor (ADF) proteins. This Arabidopsis thaliana (Mouse-ear cress) protein is Actin-interacting protein 1-2.